The chain runs to 461 residues: Kynurenine 3-monooxygenase (461 aa).

Helical transmembrane passes span 395 to 415 and 432 to 452; these read GFMN…VTFT and ILSN…AIGI.

Belongs to the aromatic-ring hydroxylase family. KMO subfamily. It depends on FAD as a cofactor.

It localises to the mitochondrion. The protein resides in the membrane. The enzyme catalyses L-kynurenine + NADPH + O2 + H(+) = 3-hydroxy-L-kynurenine + NADP(+) + H2O. It functions in the pathway cofactor biosynthesis; NAD(+) biosynthesis; quinolinate from L-kynurenine: step 1/3. Its function is as follows. Catalyzes the hydroxylation of L-kynurenine (L-Kyn) to form 3-hydroxy-L-kynurenine (L-3OHKyn). Required for synthesis of quinolinic acid. In Caenorhabditis briggsae, this protein is Kynurenine 3-monooxygenase.